Reading from the N-terminus, the 530-residue chain is GMP synthase [glutamine-hydrolyzing] (530 aa).

Residues 4–205 (RILILDYGSQ…VKDICGCEGD (202 aa)) enclose the Glutamine amidotransferase type-1 domain. C84 serves as the catalytic Nucleophile. Active-site residues include H179 and E181. The GMPS ATP-PPase domain occupies 206 to 398 (WNMPDYISEA…LGLPPQMVYR (193 aa)). 233-239 (SGGVDSL) lines the ATP pocket.

Homodimer.

It catalyses the reaction XMP + L-glutamine + ATP + H2O = GMP + L-glutamate + AMP + diphosphate + 2 H(+). Its pathway is purine metabolism; GMP biosynthesis; GMP from XMP (L-Gln route): step 1/1. Its function is as follows. Catalyzes the synthesis of GMP from XMP. This Bordetella parapertussis (strain 12822 / ATCC BAA-587 / NCTC 13253) protein is GMP synthase [glutamine-hydrolyzing].